A 416-amino-acid polypeptide reads, in one-letter code: F-box/FBD/LRR-repeat protein At1g13570 (416 aa).

Residues 5–53 form the F-box domain; it reads PDFISDLPQSIIENILTRLSIRDAIRTSVLSSKWRYKWSTLTDLVFDEK. LRR repeat units follow at residues 115-142, 164-189, 203-229, 238-263, and 294-321; these read VLKL…ELCH, QILV…SLSY, MYLY…SVSM, FEQS…VGYI, and CFED…KVSA. The region spanning 346-384 is the FBD domain; it reads LPSLESVKITDASGIRYELEFIRFLLGTSPVLETVTVSS.

The polypeptide is F-box/FBD/LRR-repeat protein At1g13570 (Arabidopsis thaliana (Mouse-ear cress)).